Here is a 434-residue protein sequence, read N- to C-terminus: Protein maelstrom homolog (434 aa).

The segment at residues 4 to 73 (RKASRNAYYF…AQGKDPGPSE (70 aa)) is a DNA-binding region (HMG box). Positions 357–385 (SHFNSSNEEQRSNTPIGDYPSRAKISGQN) are disordered.

The protein belongs to the maelstrom family. As to quaternary structure, interacts with SMARCB1, SIN3B and DDX4. Interacts with piRNA-associated proteins TDRD1, PIWIL1 and PIWIL2. Interacts with TEX19. In terms of tissue distribution, testis-specific. Expressed in various cancer cell lines, probably due to demethylation of its promoter.

Its subcellular location is the cytoplasm. The protein resides in the nucleus. Its function is as follows. Plays a central role during spermatogenesis by repressing transposable elements and preventing their mobilization, which is essential for the germline integrity. Acts via the piRNA metabolic process, which mediates the repression of transposable elements during meiosis by forming complexes composed of piRNAs and Piwi proteins and governs the methylation and subsequent repression of transposons. Its association with piP-bodies suggests a participation in the secondary piRNAs metabolic process. Required for the localization of germ-cell factors to the meiotic nuage. The sequence is that of Protein maelstrom homolog (MAEL) from Homo sapiens (Human).